We begin with the raw amino-acid sequence, 165 residues long: SPbeta prophage-derived uncharacterized protein YorR (165 aa).

This chain is SPbeta prophage-derived uncharacterized protein YorR (yorR), found in Bacillus subtilis (strain 168).